A 481-amino-acid polypeptide reads, in one-letter code: Phosphoglucosamine mutase (481 aa).

Residue S129 is the Phosphoserine intermediate of the active site. Residues S129, D271, D273, and D275 each coordinate Mg(2+). Residue S129 is modified to Phosphoserine.

This sequence belongs to the phosphohexose mutase family. Mg(2+) serves as cofactor. Activated by phosphorylation.

It carries out the reaction alpha-D-glucosamine 1-phosphate = D-glucosamine 6-phosphate. In terms of biological role, catalyzes the conversion of glucosamine-6-phosphate to glucosamine-1-phosphate. The polypeptide is Phosphoglucosamine mutase (Picosynechococcus sp. (strain ATCC 27264 / PCC 7002 / PR-6) (Agmenellum quadruplicatum)).